Consider the following 65-residue polypeptide: Sodium channel alpha-toxin Acra4 (65 aa).

One can recognise an LCN-type CS-alpha/beta domain in the interval 2-63 (RDGYIVDDKN…PIKDPSYKCH (62 aa)). 4 disulfides stabilise this stretch: Cys-12/Cys-62, Cys-16/Cys-34, Cys-20/Cys-44, and Cys-24/Cys-46. Residue Arg-65 is a propeptide, removed by a carboxypeptidase.

It belongs to the long (4 C-C) scorpion toxin superfamily. Sodium channel inhibitor family. Alpha subfamily. As to expression, expressed by the venom gland.

It is found in the secreted. Functionally, alpha toxins bind voltage-independently at site-3 of sodium channels (Nav) and inhibit the inactivation of the activated channels, thereby blocking neuronal transmission. Electrophysiological studies of this were performed using sodium-channels expressed in F11 cell culture, by patch-clamp recordings. Affinity of this toxin toward sodium channels in F11 cell line is in the order of 1 uM concentration. The chain is Sodium channel alpha-toxin Acra4 from Androctonus crassicauda (Arabian fat-tailed scorpion).